The primary structure comprises 383 residues: Aliphatic nitrilase (383 aa).

One can recognise a CN hydrolase domain in the interval 13 to 288 (VKVATVQAEP…EGLLYAELDL (276 aa)). The active-site Proton acceptor is glutamate 53. Lysine 136 acts as the Proton donor in catalysis. Cysteine 170 acts as the Nucleophile in catalysis. The interval 359 to 383 (ATLPLDAPAPAPAPEQKSGRAKAEA) is disordered.

The protein belongs to the carbon-nitrogen hydrolase superfamily. Nitrilase family.

The catalysed reaction is an aliphatic nitrile + 2 H2O = a carboxylate + NH4(+). Acts on aliphatic nitriles such as acrylonitrile, crotononitrile and glutaronitrile. In Rhodococcus rhodochrous, this protein is Aliphatic nitrilase.